Reading from the N-terminus, the 161-residue chain is Nucleotide-binding protein H16_A3060 (161 aa).

The protein belongs to the YajQ family.

Functionally, nucleotide-binding protein. The sequence is that of Nucleotide-binding protein H16_A3060 from Cupriavidus necator (strain ATCC 17699 / DSM 428 / KCTC 22496 / NCIMB 10442 / H16 / Stanier 337) (Ralstonia eutropha).